Here is a 395-residue protein sequence, read N- to C-terminus: Phosphoprotein (395 aa).

Residues 178–217 (NGVLHGSEIRSKSSSGVIPGVPQSRPQLASSPAHADPAPA) are disordered. Residues 206 to 217 (ASSPAHADPAPA) show a composition bias toward low complexity. Positions 220–283 (ENVKEIIELL…ITTIKIMDPS (64 aa)) are multimerization.

The protein belongs to the rubulavirus/avulavirus P protein family. As to quaternary structure, homotetramer. Interacts (via multimerization domain) with polymerase L; this interaction forms the polymerase L-P complex. Interacts (via N-terminus) with N0 (via Ncore); this interaction allows P to chaperon N0 to avoid N polymerization before encapsidation. Interacts (via C-terminus) with N-RNA template; this interaction positions the polymerase on the template for both transcription and replication. Interacts with host ARHGAP26; this interaction promotes host RHOA activation. Interacts with host KPNA1 and KPNA6.

The protein localises to the host cytoplasm. Functionally, essential cofactor of the RNA polymerase L that plays a central role in the transcription and replication by forming the polymerase complex with RNA polymerase L and recruiting L to the genomic N-RNA template for RNA synthesis. Also plays a central role in the encapsidation of nascent RNA chains by forming the encapsidation complex with the nucleocapsid protein N (N-P complex). Acts as a chaperone for newly synthesized free N protein, so-called N0, allowing encapsidation of nascent RNA chains during replication. The nucleoprotein protein N prevents excessive phosphorylation of P, which leads to down-regulation of viral transcription/ replication. Participates, together with N, in the formation of viral factories (viroplasms), which are large inclusions in the host cytoplasm where replication takes place. Also plays a role in viral growth by promoting host RHOA activation and thus actin formation via ARHGAP26 inhibition. The protein is Phosphoprotein (P/V) of Homo sapiens (Human).